Here is a 128-residue protein sequence, read N- to C-terminus: Glycine cleavage system H protein (128 aa).

Positions 22–104 (VATVGITEHA…YGEGWIFKMK (83 aa)) constitute a Lipoyl-binding domain. Lys63 carries the post-translational modification N6-lipoyllysine.

This sequence belongs to the GcvH family. In terms of assembly, the glycine cleavage system is composed of four proteins: P, T, L and H. It depends on (R)-lipoate as a cofactor.

The glycine cleavage system catalyzes the degradation of glycine. The H protein shuttles the methylamine group of glycine from the P protein to the T protein. The sequence is that of Glycine cleavage system H protein from Methylacidiphilum infernorum (isolate V4) (Methylokorus infernorum (strain V4)).